A 373-amino-acid chain; its full sequence is Mannitol-1-phosphate 5-dehydrogenase (373 aa).

An NAD(+)-binding site is contributed by 3 to 14; it reads ALHFGAGNIGRG.

It belongs to the mannitol dehydrogenase family.

It catalyses the reaction D-mannitol 1-phosphate + NAD(+) = beta-D-fructose 6-phosphate + NADH + H(+). The polypeptide is Mannitol-1-phosphate 5-dehydrogenase (Bacillus pumilus (strain SAFR-032)).